The chain runs to 282 residues: 2,3,4,5-tetrahydropyridine-2,6-dicarboxylate N-succinyltransferase (282 aa).

Residues Arg109 and Asp146 each contribute to the substrate site.

Belongs to the transferase hexapeptide repeat family. In terms of assembly, homotrimer.

It localises to the cytoplasm. The catalysed reaction is (S)-2,3,4,5-tetrahydrodipicolinate + succinyl-CoA + H2O = (S)-2-succinylamino-6-oxoheptanedioate + CoA. It functions in the pathway amino-acid biosynthesis; L-lysine biosynthesis via DAP pathway; LL-2,6-diaminopimelate from (S)-tetrahydrodipicolinate (succinylase route): step 1/3. The protein is 2,3,4,5-tetrahydropyridine-2,6-dicarboxylate N-succinyltransferase of Bartonella henselae (strain ATCC 49882 / DSM 28221 / CCUG 30454 / Houston 1) (Rochalimaea henselae).